The primary structure comprises 428 residues: C4-dicarboxylate transport protein (428 aa).

A run of 8 helical transmembrane segments spans residues 8–28 (SLYF…HFYP), 44–64 (LIKM…IAGM), 76–96 (VALL…LIIV), 142–162 (IGAF…LFGF), 184–204 (VIFG…FGAM), 222–242 (LIIC…GSIA), 326–346 (IVHQ…AAGV), and 352–372 (IVLA…LALI).

The protein belongs to the dicarboxylate/amino acid:cation symporter (DAACS) (TC 2.A.23) family.

It is found in the cell inner membrane. Its function is as follows. Responsible for the transport of dicarboxylates such as succinate, fumarate, and malate from the periplasm across the membrane. This Escherichia coli O139:H28 (strain E24377A / ETEC) protein is C4-dicarboxylate transport protein.